A 277-amino-acid polypeptide reads, in one-letter code: Probable endonuclease 4 (277 aa).

Residues histidine 67, histidine 107, glutamate 142, aspartate 176, histidine 179, histidine 211, aspartate 224, histidine 226, and glutamate 256 each contribute to the Zn(2+) site.

This sequence belongs to the AP endonuclease 2 family. The cofactor is Zn(2+).

It carries out the reaction Endonucleolytic cleavage to 5'-phosphooligonucleotide end-products.. Endonuclease IV plays a role in DNA repair. It cleaves phosphodiester bonds at apurinic or apyrimidinic (AP) sites, generating a 3'-hydroxyl group and a 5'-terminal sugar phosphate. This Akkermansia muciniphila (strain ATCC BAA-835 / DSM 22959 / JCM 33894 / BCRC 81048 / CCUG 64013 / CIP 107961 / Muc) protein is Probable endonuclease 4.